We begin with the raw amino-acid sequence, 522 residues long: Protein disulfide-isomerase (522 aa).

Residues 1-28 (MKFSAGAVLSWSSLLLASSVFAQQEAVA) constitute a signal peptide (or 22). Positions 29–141 (PEDSAVVKLA…VQFMIKQSQP (113 aa)) constitute a Thioredoxin 1 domain. Catalysis depends on nucleophile residues cysteine 61 and cysteine 64. Cysteine 61 and cysteine 64 are joined by a disulfide. N-linked (GlcNAc...) asparagine glycans are attached at residues asparagine 82, asparagine 117, asparagine 155, and asparagine 174. A Thioredoxin 2 domain is found at 356 to 485 (FLKGDASPIV…LFDFIKENGH (130 aa)). Residues cysteine 406 and cysteine 409 each act as nucleophile in the active site. Cysteine 406 and cysteine 409 are joined by a disulfide. N-linked (GlcNAc...) asparagine glycosylation occurs at asparagine 425. Residues 497–522 (AQEKAAEEADADAELADEEDAIHDEL) form a disordered region. Positions 504–522 (EADADAELADEEDAIHDEL) are enriched in acidic residues. A Prevents secretion from ER motif is present at residues 519-522 (HDEL).

It belongs to the protein disulfide isomerase family. In terms of assembly, interacts with EPS1, KAR2 and MNL1. Post-translationally, the N-terminus is blocked.

It localises to the endoplasmic reticulum lumen. It carries out the reaction Catalyzes the rearrangement of -S-S- bonds in proteins.. Functionally, protein disulfide isomerase of ER lumen required for formation of disulfide bonds in secretory and cell-surface proteins and which unscrambles non-native disulfide bonds. Forms a complex with MNL1 to process unfolded protein-bound Man8GlcNAc2 oligosaccharides to Man7GlcNAc2, promoting degradation in unfolded protein response. The sequence is that of Protein disulfide-isomerase (PDI1) from Saccharomyces cerevisiae (strain ATCC 204508 / S288c) (Baker's yeast).